A 363-amino-acid polypeptide reads, in one-letter code: Carbamoyl phosphate synthase small chain (363 aa).

The interval 1–171 (MEDGTLFAGA…PYRIPGPGPR (171 aa)) is CPSase. Positions 39, 219, and 221 each coordinate L-glutamine. One can recognise a Glutamine amidotransferase type-1 domain in the interval 171 to 359 (RVVAVDFGAK…LALVDRSAVS (189 aa)). Cys248 serves as the catalytic Nucleophile. 5 residues coordinate L-glutamine: Leu249, Gln252, Asn290, Gly292, and Tyr293. Active-site residues include His332 and Glu334.

It belongs to the CarA family. In terms of assembly, composed of two chains; the small (or glutamine) chain promotes the hydrolysis of glutamine to ammonia, which is used by the large (or ammonia) chain to synthesize carbamoyl phosphate. Tetramer of heterodimers (alpha,beta)4.

It catalyses the reaction hydrogencarbonate + L-glutamine + 2 ATP + H2O = carbamoyl phosphate + L-glutamate + 2 ADP + phosphate + 2 H(+). The enzyme catalyses L-glutamine + H2O = L-glutamate + NH4(+). It functions in the pathway amino-acid biosynthesis; L-arginine biosynthesis; carbamoyl phosphate from bicarbonate: step 1/1. The protein operates within pyrimidine metabolism; UMP biosynthesis via de novo pathway; (S)-dihydroorotate from bicarbonate: step 1/3. Small subunit of the glutamine-dependent carbamoyl phosphate synthetase (CPSase). CPSase catalyzes the formation of carbamoyl phosphate from the ammonia moiety of glutamine, carbonate, and phosphate donated by ATP, constituting the first step of 2 biosynthetic pathways, one leading to arginine and/or urea and the other to pyrimidine nucleotides. The small subunit (glutamine amidotransferase) binds and cleaves glutamine to supply the large subunit with the substrate ammonia. This chain is Carbamoyl phosphate synthase small chain, found in Symbiobacterium thermophilum (strain DSM 24528 / JCM 14929 / IAM 14863 / T).